Consider the following 794-residue polypeptide: DNA ligase (794 aa).

NAD(+) contacts are provided by residues 35–39 (DAEYD), 84–85 (SL), and glutamate 126. Lysine 128 functions as the N6-AMP-lysine intermediate in the catalytic mechanism. Residues arginine 149, glutamate 186, lysine 302, and lysine 326 each coordinate NAD(+). Zn(2+) contacts are provided by cysteine 420, cysteine 423, cysteine 450, and cysteine 456. Positions 711 to 794 (VEGLPLAGQT…KLLDEYGVAH (84 aa)) constitute a BRCT domain.

This sequence belongs to the NAD-dependent DNA ligase family. LigA subfamily. Mg(2+) is required as a cofactor. Requires Mn(2+) as cofactor.

It catalyses the reaction NAD(+) + (deoxyribonucleotide)n-3'-hydroxyl + 5'-phospho-(deoxyribonucleotide)m = (deoxyribonucleotide)n+m + AMP + beta-nicotinamide D-nucleotide.. Functionally, DNA ligase that catalyzes the formation of phosphodiester linkages between 5'-phosphoryl and 3'-hydroxyl groups in double-stranded DNA using NAD as a coenzyme and as the energy source for the reaction. It is essential for DNA replication and repair of damaged DNA. This chain is DNA ligase, found in Pseudomonas paraeruginosa (strain DSM 24068 / PA7) (Pseudomonas aeruginosa (strain PA7)).